The following is a 90-amino-acid chain: Phosphoribosyl-ATP pyrophosphatase (90 aa).

Belongs to the PRA-PH family.

It localises to the cytoplasm. The enzyme catalyses 1-(5-phospho-beta-D-ribosyl)-ATP + H2O = 1-(5-phospho-beta-D-ribosyl)-5'-AMP + diphosphate + H(+). The protein operates within amino-acid biosynthesis; L-histidine biosynthesis; L-histidine from 5-phospho-alpha-D-ribose 1-diphosphate: step 2/9. In Streptomyces griseus subsp. griseus (strain JCM 4626 / CBS 651.72 / NBRC 13350 / KCC S-0626 / ISP 5235), this protein is Phosphoribosyl-ATP pyrophosphatase.